The sequence spans 456 residues: ACT domain-containing protein ACR5 (456 aa).

4 consecutive ACT domains span residues 39–115, 130–207, 271–347, and 349–432; these read VIKV…FSPS, VVEL…SSGR, IVMI…VSEG, and KLEL…PSPQ.

As to expression, expressed in stems and siliques.

May bind amino acids. In Arabidopsis thaliana (Mouse-ear cress), this protein is ACT domain-containing protein ACR5.